Reading from the N-terminus, the 171-residue chain is Putative F-box protein At1g32020 (171 aa).

An F-box domain is found at Cys3–Lys49.

This is Putative F-box protein At1g32020 from Arabidopsis thaliana (Mouse-ear cress).